The following is a 406-amino-acid chain: Coenzyme A biosynthesis bifunctional protein CoaBC (406 aa).

The phosphopantothenoylcysteine decarboxylase stretch occupies residues M1–H191. The Proton donor role is filled by C157. Residues V192–S406 are phosphopantothenate--cysteine ligase. Residues D281, K291, F325, K339, and K343 each contribute to the CTP site.

This sequence in the N-terminal section; belongs to the HFCD (homo-oligomeric flavin containing Cys decarboxylase) superfamily. It in the C-terminal section; belongs to the PPC synthetase family. It depends on Mg(2+) as a cofactor. Requires FMN as cofactor.

It catalyses the reaction N-[(R)-4-phosphopantothenoyl]-L-cysteine + H(+) = (R)-4'-phosphopantetheine + CO2. The enzyme catalyses (R)-4'-phosphopantothenate + L-cysteine + CTP = N-[(R)-4-phosphopantothenoyl]-L-cysteine + CMP + diphosphate + H(+). It participates in cofactor biosynthesis; coenzyme A biosynthesis; CoA from (R)-pantothenate: step 2/5. Its pathway is cofactor biosynthesis; coenzyme A biosynthesis; CoA from (R)-pantothenate: step 3/5. Catalyzes two sequential steps in the biosynthesis of coenzyme A. In the first step cysteine is conjugated to 4'-phosphopantothenate to form 4-phosphopantothenoylcysteine. In the second step the latter compound is decarboxylated to form 4'-phosphopantotheine. This Bacillus subtilis (strain 168) protein is Coenzyme A biosynthesis bifunctional protein CoaBC.